The sequence spans 886 residues: Leucine-rich repeat-containing protein sog2 (886 aa).

LRR repeat units lie at residues 28–49 (NALTLDLSHLNLRELPYEQLER), 53–74 (RIARLALGHNFIKSIGPEILKF), 76–97 (RLRYLNIRSNVLREFPESLCRL), 99–120 (SLEILDISRNKIKQLPESFGAL), 122–143 (NLKVLSISKNRLFELPTYIAHM), and 145–166 (NLEILKIENNHIVFPPPHIANN). Disordered regions lie at residues 236–288 (SPGM…THPP), 301–364 (SPRQ…ASPI), 394–431 (PTQLSASAKTSAISLPEVAKKERNRSNSTNDDYSSTRL), and 455–483 (RIFAQDPHPSPRLKKEETHENGSNLTNDS). Positions 243–277 (VTPSPHSHSPAGHQQSTPKSTLSKTNENSEGTLYD) are enriched in polar residues. Phosphoserine is present on S301. Composition is skewed to polar residues over residues 312 to 347 (SLATGLNSPSVSKPPSSATGPLYHSPQSSLTNSSVA), 394 to 406 (PTQLSASAKTSAI), and 419 to 431 (SNSTNDDYSSTRL). Position 464 is a phosphoserine (S464).

The protein resides in the cytoplasm. It localises to the nucleus. This Schizosaccharomyces pombe (strain 972 / ATCC 24843) (Fission yeast) protein is Leucine-rich repeat-containing protein sog2.